The sequence spans 217 residues: Probable transaldolase (217 aa).

K83 (schiff-base intermediate with substrate) is an active-site residue.

Belongs to the transaldolase family. Type 3B subfamily.

It localises to the cytoplasm. The catalysed reaction is D-sedoheptulose 7-phosphate + D-glyceraldehyde 3-phosphate = D-erythrose 4-phosphate + beta-D-fructose 6-phosphate. Its pathway is carbohydrate degradation; pentose phosphate pathway; D-glyceraldehyde 3-phosphate and beta-D-fructose 6-phosphate from D-ribose 5-phosphate and D-xylulose 5-phosphate (non-oxidative stage): step 2/3. In terms of biological role, transaldolase is important for the balance of metabolites in the pentose-phosphate pathway. The protein is Probable transaldolase of Caldicellulosiruptor saccharolyticus (strain ATCC 43494 / DSM 8903 / Tp8T 6331).